The following is a 357-amino-acid chain: D-alanine--D-alanine ligase (357 aa).

Residues 134–339 (KQLFEHRGLP…YPDLIAKLID (206 aa)) enclose the ATP-grasp domain. 167–222 (NDKLTYPVFVKPANLGSSVGISKCNNEEELKSGIAEAFQFDRKLVIEQGINAREIE) contributes to the ATP binding site. The Mg(2+) site is built by Asp-293, Glu-306, and Asn-308.

The protein belongs to the D-alanine--D-alanine ligase family. Requires Mg(2+) as cofactor. Mn(2+) is required as a cofactor.

The protein localises to the cytoplasm. The catalysed reaction is 2 D-alanine + ATP = D-alanyl-D-alanine + ADP + phosphate + H(+). The protein operates within cell wall biogenesis; peptidoglycan biosynthesis. Cell wall formation. The chain is D-alanine--D-alanine ligase from Staphylococcus epidermidis (strain ATCC 35984 / DSM 28319 / BCRC 17069 / CCUG 31568 / BM 3577 / RP62A).